The sequence spans 580 residues: Rap guanine nucleotide exchange factor 5 (580 aa).

Residues 67–200 enclose the N-terminal Ras-GEF domain; sequence DRYVVVSGTP…ELKEFQKILG (134 aa). Positions 344–579 constitute a Ras-GEF domain; it reads NTWDLALELM…FELSHRLEPR (236 aa).

In terms of tissue distribution, in the embryo, expressed in young neurons of the developing telencephalon, diencephalon and hindbrain. Not expressed in progenitor cells in the ventricular zone.

The protein resides in the nucleus. Guanine nucleotide exchange factor (GEF) for RAP1A, RAP2A and MRAS/M-Ras-GTP. Its association with MRAS inhibits Rap1 activation. The protein is Rap guanine nucleotide exchange factor 5 (Rapgef5) of Rattus norvegicus (Rat).